A 51-amino-acid polypeptide reads, in one-letter code: uncharacterized protein (51 aa).

This is an uncharacterized protein from Grapevine leafroll-associated virus 3 (isolate United States/NY1) (GLRaV-3).